A 501-amino-acid polypeptide reads, in one-letter code: Armadillo repeat-containing protein 6 (501 aa).

Residue S64 is modified to Phosphoserine. 4 ARM repeats span residues G220–N264, K274–G318, L319–G369, and T370–G412. H263 is modified (pros-methylhistidine).

It belongs to the ARMC6 family. Methylated at His-263 by METTL9.

This chain is Armadillo repeat-containing protein 6 (ARMC6), found in Homo sapiens (Human).